The following is a 51-amino-acid chain: Large ribosomal subunit protein eL39 (51 aa).

The disordered stretch occupies residues 32 to 51 (KGSVKQHPKMRHWRRKNLKK). Residues 33–51 (GSVKQHPKMRHWRRKNLKK) are compositionally biased toward basic residues.

The protein belongs to the eukaryotic ribosomal protein eL39 family.

The chain is Large ribosomal subunit protein eL39 from Methanococcus maripaludis (strain C5 / ATCC BAA-1333).